The sequence spans 213 residues: Protein-L-isoaspartate O-methyltransferase (213 aa).

Ser-64 is an active-site residue.

It belongs to the methyltransferase superfamily. L-isoaspartyl/D-aspartyl protein methyltransferase family.

Its subcellular location is the cytoplasm. It catalyses the reaction [protein]-L-isoaspartate + S-adenosyl-L-methionine = [protein]-L-isoaspartate alpha-methyl ester + S-adenosyl-L-homocysteine. Catalyzes the methyl esterification of L-isoaspartyl residues in peptides and proteins that result from spontaneous decomposition of normal L-aspartyl and L-asparaginyl residues. It plays a role in the repair and/or degradation of damaged proteins. This chain is Protein-L-isoaspartate O-methyltransferase, found in Flavobacterium psychrophilum (strain ATCC 49511 / DSM 21280 / CIP 103535 / JIP02/86).